The following is a 311-amino-acid chain: Olfactory receptor 5AN1 (311 aa).

The Extracellular portion of the chain corresponds to 1–26 (MTGGGNITEITYFILLGFSDFPRIIK). N6 carries N-linked (GlcNAc...) asparagine glycosylation. Residues 27–47 (VLFTIFLVIYITSLAWNLSLI) traverse the membrane as a helical segment. Residues 48-55 (VLIRMDSH) lie on the Cytoplasmic side of the membrane. The chain crosses the membrane as a helical span at residues 56 to 76 (LHTPMYFFLSNLSFIDVCYIS). The Extracellular segment spans residues 77-100 (STVPKMLSNLLQEQQTITFVGCII). A disulfide bond links C98 and C190. The chain crosses the membrane as a helical span at residues 101–121 (QYFIFSTMGLSESCLMTAMAY). Over 122 to 134 (DRYAAICNPLLYS) the chain is Cytoplasmic. A helical membrane pass occupies residues 135–155 (SIMSPTLCVWMVLGAYMTGLT). The Extracellular portion of the chain corresponds to 156 to 197 (ASLFQIGALLQLHFCGSNVIRHFFCDMPQLLILSCTDTFFVQ). Residues 198–218 (VMTAILTMFFGIASALVIMIS) form a helical membrane-spanning segment. The Cytoplasmic segment spans residues 219 to 238 (YGYIGISIMKITSAKGRSKA). Residues 239-259 (FNTCASHLTAVSLFYTSGIFV) form a helical membrane-spanning segment. Topologically, residues 260-272 (YLSSSSGGSSSFD) are extracellular. A helical transmembrane segment spans residues 273 to 293 (RFASVFYTVVIPMLNPLIYSL). The Cytoplasmic portion of the chain corresponds to 294-311 (RNKEIKDALKRLQKRKCC).

Belongs to the G-protein coupled receptor 1 family.

It is found in the cell membrane. In terms of biological role, odorant receptor for musk, which specifically recognizes muscone, musk xylol, and musk ketone. Ligand-binding causes a conformation change that triggers signaling via G(s)-class of G alpha protein GNAL, activating adenylyl cyclase. The protein is Olfactory receptor 5AN1 of Homo sapiens (Human).